The primary structure comprises 188 residues: dCTP deaminase (188 aa).

DCTP is bound by residues 111–116, 135–137, glutamine 156, tyrosine 170, and glutamine 180; these read KSTYAR and TLE. Residue glutamate 137 is the Proton donor/acceptor of the active site.

Belongs to the dCTP deaminase family. Homotrimer.

It carries out the reaction dCTP + H2O + H(+) = dUTP + NH4(+). Its pathway is pyrimidine metabolism; dUMP biosynthesis; dUMP from dCTP (dUTP route): step 1/2. Functionally, catalyzes the deamination of dCTP to dUTP. This chain is dCTP deaminase, found in Aromatoleum aromaticum (strain DSM 19018 / LMG 30748 / EbN1) (Azoarcus sp. (strain EbN1)).